A 150-amino-acid polypeptide reads, in one-letter code: Large ribosomal subunit protein uL23 (150 aa).

The segment at 1 to 24 (MNKENKTQAVNKAKNTAKVAKKGS) is disordered. Positions 7 to 18 (TQAVNKAKNTAK) are enriched in low complexity.

Belongs to the universal ribosomal protein uL23 family.

The chain is Large ribosomal subunit protein uL23 (RPL23A) from Tetrahymena thermophila (strain SB210).